The following is a 372-amino-acid chain: MMSVEHSANSQKKVIVGMSGGVDSSVSAYLLKQQGYQVEGLFMKNWEEDDNEEYCTAAEDLADAQAVCDKLGIPLHTINFAAEYWDNVFEYFLAEYKAGRTPNPDILCNKEIKFKAFLEFADEVLDADYIAMGHYVRRTFPQNGEKPQMLRGLDGNKDQSYFLYTLSHEQVARTLFPVGELEKPEVRRIAEEQGLITAKKKDSTGICFIGERKFTDFLSRYLPAQPGKIETPEGKVIGEHQGLMYHTLGQRKGLHIGGMKESSEQPWYVADKDLKRNVLIAVQGADHPLLKSHGLVAAQLHWVDRTPITEPVRCSVKTRYRQSDIACTIIPLSDDRIKVMFDEPQVAVTPGQSAVFYQGEICLGGGIIEERI.

Residues 17–24 (GMSGGVDS) and methionine 43 each bind ATP. Residues 103–105 (NPD) form an interaction with target base in tRNA region. Cysteine 108 (nucleophile) is an active-site residue. Cysteine 108 and cysteine 207 are disulfide-bonded. Glycine 133 provides a ligand contact to ATP. An interaction with tRNA region spans residues 157–159 (KDQ). Cysteine 207 acts as the Cysteine persulfide intermediate in catalysis. The tract at residues 319–320 (RY) is interaction with tRNA.

Belongs to the MnmA/TRMU family.

Its subcellular location is the cytoplasm. It carries out the reaction S-sulfanyl-L-cysteinyl-[protein] + uridine(34) in tRNA + AH2 + ATP = 2-thiouridine(34) in tRNA + L-cysteinyl-[protein] + A + AMP + diphosphate + H(+). Its function is as follows. Catalyzes the 2-thiolation of uridine at the wobble position (U34) of tRNA, leading to the formation of s(2)U34. In Vibrio cholerae serotype O1 (strain ATCC 39541 / Classical Ogawa 395 / O395), this protein is tRNA-specific 2-thiouridylase MnmA.